The primary structure comprises 563 residues: Arginine--tRNA ligase (563 aa).

Positions 121-131 (PNIAKPFSIGH) match the 'HIGH' region motif.

It belongs to the class-I aminoacyl-tRNA synthetase family. In terms of assembly, monomer.

The protein resides in the cytoplasm. The enzyme catalyses tRNA(Arg) + L-arginine + ATP = L-arginyl-tRNA(Arg) + AMP + diphosphate. The chain is Arginine--tRNA ligase from Streptococcus pyogenes serotype M2 (strain MGAS10270).